The sequence spans 63 residues: Large ribosomal subunit protein uL29 (63 aa).

This sequence belongs to the universal ribosomal protein uL29 family.

This chain is Large ribosomal subunit protein uL29, found in Colwellia psychrerythraea (strain 34H / ATCC BAA-681) (Vibrio psychroerythus).